A 142-amino-acid chain; its full sequence is ATP synthase epsilon chain (142 aa).

The protein belongs to the ATPase epsilon chain family. F-type ATPases have 2 components, CF(1) - the catalytic core - and CF(0) - the membrane proton channel. CF(1) has five subunits: alpha(3), beta(3), gamma(1), delta(1), epsilon(1). CF(0) has three main subunits: a, b and c.

It is found in the cell inner membrane. In terms of biological role, produces ATP from ADP in the presence of a proton gradient across the membrane. The chain is ATP synthase epsilon chain from Shewanella baltica (strain OS185).